The primary structure comprises 133 residues: Holo-[acyl-carrier-protein] synthase (133 aa).

Residues D8 and E57 each contribute to the Mg(2+) site.

It belongs to the P-Pant transferase superfamily. AcpS family. Mg(2+) serves as cofactor.

Its subcellular location is the cytoplasm. It catalyses the reaction apo-[ACP] + CoA = holo-[ACP] + adenosine 3',5'-bisphosphate + H(+). Functionally, transfers the 4'-phosphopantetheine moiety from coenzyme A to a Ser of acyl-carrier-protein. The polypeptide is Holo-[acyl-carrier-protein] synthase (Bartonella henselae (strain ATCC 49882 / DSM 28221 / CCUG 30454 / Houston 1) (Rochalimaea henselae)).